A 179-amino-acid polypeptide reads, in one-letter code: D-glycero-beta-D-manno-heptose-1,7-bisphosphate 7-phosphatase (179 aa).

D7 (nucleophile) is an active-site residue. Positions 7 and 9 each coordinate Mg(2+). A substrate-binding site is contributed by D7. Residue D9 is the Proton donor of the active site. Residues 15 to 19 (DSDAF), 50 to 53 (TNQS), and R57 each bind substrate. C89, H91, C97, and C99 together coordinate Zn(2+). Position 100 (R100) interacts with substrate. Position 126 (D126) interacts with Mg(2+). R129 contributes to the substrate binding site.

In terms of assembly, monomer. Mg(2+) is required as a cofactor. The cofactor is Zn(2+).

The protein resides in the cytoplasm. The enzyme catalyses D-glycero-beta-D-manno-heptose 1,7-bisphosphate + H2O = D-glycero-beta-D-manno-heptose 1-phosphate + phosphate. It functions in the pathway nucleotide-sugar biosynthesis; ADP-L-glycero-beta-D-manno-heptose biosynthesis; ADP-L-glycero-beta-D-manno-heptose from D-glycero-beta-D-manno-heptose 7-phosphate: step 2/4. Its pathway is bacterial outer membrane biogenesis; LPS core biosynthesis. Its function is as follows. Converts the D-glycero-beta-D-manno-heptose 1,7-bisphosphate (beta-HBP) intermediate into D-glycero-beta-D-manno-heptose 1-phosphate by removing the phosphate group at the C-7 position. This is D-glycero-beta-D-manno-heptose-1,7-bisphosphate 7-phosphatase from Bordetella bronchiseptica (strain ATCC BAA-588 / NCTC 13252 / RB50) (Alcaligenes bronchisepticus).